The following is a 593-amino-acid chain: Maternal uncoordinated protein 2 (593 aa).

It belongs to the SCC4/mau-2 family. May heterodimerize with scc-2/SCC2 to form the cohesin loading complex.

It is found in the nucleus. The protein localises to the nucleoplasm. Its subcellular location is the cytoplasm. Its function is as follows. Plays an important role in the loading of the cohesin complex on to DNA. Forms a heterodimeric complex (also known as cohesin loading complex) with scc-2/SCC2 which mediates the loading of the cohesin complex onto chromatin. Required for normal development until the fourth larval stage. Functions cell autonomously to guide migrations during the development of the nervous system. Participates in the guidance of mechanosensory neuron AVM by a slt-1-independent mechanism. Regulates chromosome segregation in early embryos. The chain is Maternal uncoordinated protein 2 from Caenorhabditis elegans.